The chain runs to 286 residues: Putative quercetin 2,3-dioxygenase PA2418 (286 aa).

Residues His-61, His-63, His-105, and Glu-107 each contribute to the a divalent metal cation site.

It belongs to the pirin family. It depends on a divalent metal cation as a cofactor.

The enzyme catalyses quercetin + O2 = 2-(3,4-dihydroxybenzoyloxy)-4,6-dihydroxybenzoate + CO. It participates in flavonoid metabolism; quercetin degradation. Putative quercetin 2,3-dioxygenase. This is Putative quercetin 2,3-dioxygenase PA2418 from Pseudomonas aeruginosa (strain ATCC 15692 / DSM 22644 / CIP 104116 / JCM 14847 / LMG 12228 / 1C / PRS 101 / PAO1).